An 822-amino-acid chain; its full sequence is Phenylalanine--tRNA ligase beta subunit (822 aa).

Residues 39-150 form the tRNA-binding domain; it reads ADRLVGFRTA…ETAPIGESYA (112 aa). The region spanning 399 to 502 is the B5 domain; that stretch reads DWKRTARLRF…RLYGLDNVPA (104 aa). Residues Asp486, Glu489, and Glu490 each coordinate Mg(2+). In terms of domain architecture, FDX-ACB spans 728 to 821; that stretch reads SPLQPVRRDF…VLKATGAVLR (94 aa).

Belongs to the phenylalanyl-tRNA synthetase beta subunit family. Type 1 subfamily. Tetramer of two alpha and two beta subunits. Mg(2+) serves as cofactor.

It is found in the cytoplasm. The catalysed reaction is tRNA(Phe) + L-phenylalanine + ATP = L-phenylalanyl-tRNA(Phe) + AMP + diphosphate + H(+). The sequence is that of Phenylalanine--tRNA ligase beta subunit from Gluconobacter oxydans (strain 621H) (Gluconobacter suboxydans).